Reading from the N-terminus, the 241-residue chain is Uridylate kinase (241 aa).

Residue 14–17 participates in ATP binding; sequence KLSG. UMP is bound at residue Gly-56. Residues Gly-57 and Arg-61 each contribute to the ATP site. UMP-binding positions include Asp-77 and 138–145; that span reads TGNPFFTT. Residues Thr-165, Tyr-171, and Asp-174 each contribute to the ATP site.

This sequence belongs to the UMP kinase family. As to quaternary structure, homohexamer.

The protein localises to the cytoplasm. The enzyme catalyses UMP + ATP = UDP + ADP. Its pathway is pyrimidine metabolism; CTP biosynthesis via de novo pathway; UDP from UMP (UMPK route): step 1/1. With respect to regulation, inhibited by UTP. Catalyzes the reversible phosphorylation of UMP to UDP. The sequence is that of Uridylate kinase from Psychrobacter cryohalolentis (strain ATCC BAA-1226 / DSM 17306 / VKM B-2378 / K5).